Consider the following 1016-residue polypeptide: FHIP family protein Bm1_18400 (1016 aa).

Disordered regions lie at residues 586–608 and 757–778; these read DSLRQHTPPPELGEQESSSRSSF and SDGFKSDTNNDNDDEDPAPLGK.

It belongs to the FHIP family.

The polypeptide is FHIP family protein Bm1_18400 (Brugia malayi (Filarial nematode worm)).